The primary structure comprises 134 residues: Sec-independent protein translocase protein TatB (134 aa).

A helical membrane pass occupies residues Phe-2 to Gly-22. The tract at residues Ala-90–Lys-134 is disordered. The span at Ser-123 to Lys-134 shows a compositional bias: polar residues.

It belongs to the TatB family. The Tat system comprises two distinct complexes: a TatABC complex, containing multiple copies of TatA, TatB and TatC subunits, and a separate TatA complex, containing only TatA subunits. Substrates initially bind to the TatABC complex, which probably triggers association of the separate TatA complex to form the active translocon.

The protein localises to the cell inner membrane. Functionally, part of the twin-arginine translocation (Tat) system that transports large folded proteins containing a characteristic twin-arginine motif in their signal peptide across membranes. Together with TatC, TatB is part of a receptor directly interacting with Tat signal peptides. TatB may form an oligomeric binding site that transiently accommodates folded Tat precursor proteins before their translocation. This Shewanella frigidimarina (strain NCIMB 400) protein is Sec-independent protein translocase protein TatB.